Consider the following 673-residue polypeptide: FLYWCH-type zinc finger-containing protein 1 (673 aa).

Residues 1–62 are disordered; it reads MPLPEPSEQD…SSTATLPNNT (62 aa). Ser21 is modified (phosphoserine). The span at 47-62 shows a compositional bias: polar residues; that stretch reads VASQETSSTATLPNNT. FLYWCH-type zinc fingers lie at residues 92–150 and 235–293; these read FLKT…DHCH and FLKT…SHCH. Lys110 is covalently cross-linked (Glycyl lysine isopeptide (Lys-Gly) (interchain with G-Cter in SUMO2)). Basic and acidic residues predominate over residues 147 to 158; sequence DHCHPPEKEGLD. Residues 147-178 are disordered; it reads DHCHPPEKEGLDRKKRHRGRPPSSALPEGAEV. Ser294 and Ser339 each carry phosphoserine. The tract at residues 351–402 is disordered; the sequence is LSRSKSKSKSKSRSKSKSKSRSRSRKRAKKQQESSQEPPEEDQDVDPRGPEF. A compositionally biased stretch (basic residues) spans 354–379; it reads SKSKSKSKSRSKSKSKSRSRSRKRAK. FLYWCH-type zinc fingers lie at residues 402 to 460, 490 to 548, and 581 to 639; these read FLKT…SHCH, FLKT…RHCH, and FLRT…SHCH. The disordered stretch occupies residues 646–673; that stretch reads LEALRQREKAPSAAKKKKKKKKKKKGIH. The segment covering 659-673 has biased composition (basic residues); sequence AKKKKKKKKKKKGIH. Lys666 participates in a covalent cross-link: Glycyl lysine isopeptide (Lys-Gly) (interchain with G-Cter in SUMO2).

As to quaternary structure, interacts with CTNNB1 (when unphosphorylated), perhaps preventing interaction of CTNNB1 with TCF4, and thereby regulating transcription activation; phosphorylation of CTNNB1 may inhibit the interaction.

It localises to the nucleus. Its subcellular location is the chromosome. It is found in the centromere. Its function is as follows. Transcription cofactor. Negatively regulates transcription activation by catenin beta-1 CTNNB1, perhaps acting by competing with TCF4 for CTNNB1 binding. May play a role in DNA-damage response signaling. Binds specifically to DNA sequences at peri-centromeric chromatin loci. The protein is FLYWCH-type zinc finger-containing protein 1 (Flywch1) of Mus musculus (Mouse).